Here is a 192-residue protein sequence, read N- to C-terminus: LexA repressor (192 aa).

A DNA-binding region (H-T-H motif) is located at residues 15–35 (RAEIARELGFRSANAAEEHLK). Residues S109 and K146 each act as for autocatalytic cleavage activity in the active site.

Belongs to the peptidase S24 family. Homodimer.

It catalyses the reaction Hydrolysis of Ala-|-Gly bond in repressor LexA.. Its function is as follows. Represses a number of genes involved in the response to DNA damage (SOS response), including recA and lexA. In the presence of single-stranded DNA, RecA interacts with LexA causing an autocatalytic cleavage which disrupts the DNA-binding part of LexA, leading to derepression of the SOS regulon and eventually DNA repair. The polypeptide is LexA repressor (Photobacterium profundum (strain SS9)).